Consider the following 360-residue polypeptide: POU domain, class 5, transcription factor 1 (360 aa).

Disordered stretches follow at residues 1 to 52 and 88 to 114; these read MAGH…PGVG and GGLE…SPEP. A 9aaTAD motif is present at residues 4 to 12; that stretch reads HLASDFAFS. A Phosphoserine; by MAPK modification is found at S111. A Glycyl lysine isopeptide (Lys-Gly) (interchain with G-Cter in SUMO) cross-link involves residue K123. The POU-specific domain maps to 138–212; it reads DIKALQKELE…LLQKWVEEAD (75 aa). Positions 157 and 164 each coordinate DNA. DNA-binding stretches follow at residues 180-186 and 193-196; these read SQTTICR and SFKN. Positions 230 to 289 form a DNA-binding region, homeobox; sequence RKRKRTSIENRVRGNLENLFLQCPKPTLQQISHIAQQLGLEKDVVRVWFCNRRQKGKRSS. T235 carries the phosphothreonine modification. Phosphoserine is present on residues S236, S289, S290, and S355.

It belongs to the POU transcription factor family. Class-5 subfamily. In terms of assembly, interacts with PKM. Interacts with WWP2. Interacts with UBE2I and ZSCAN10. Interacts with PCGF1. Interacts with ESRRB; recruits ESRRB near the POU5F1-SOX2 element in the NANOG proximal promoter; the interaction is DNA independent. Interacts with ZNF322. Interacts with MAPK8 and MAPK9; the interaction allows MAPK8 and MAPK9 to phosphorylate POU5F1 on Ser-355. Interacts (when phosphorylated on Ser-355) with FBXW8. Interacts with FBXW4. Interacts with SOX2 and SOX15; binds synergistically with either SOX2 or SOX15 to DNA. Interacts with DDX56. In terms of processing, sumoylation enhances the protein stability, DNA binding and transactivation activity. Sumoylation is required for enhanced YES1 expression. Post-translationally, ubiquitinated; undergoes 'Lys-63'-linked polyubiquitination by WWP2 leading to proteasomal degradation. ERK1/2-mediated phosphorylation at Ser-111 promotes nuclear exclusion and proteasomal degradation. Phosphorylation at Thr-235 and Ser-236 decrease DNA-binding and alters ability to activate transcription. In terms of tissue distribution, expressed in developing brain. Highest levels found in specific cell layers of the cortex, the olfactory bulb, the hippocampus and the cerebellum. Low levels of expression in adult tissues.

It is found in the cytoplasm. The protein resides in the nucleus. Transcription factor that binds to the octamer motif (5'-ATTTGCAT-3'). Forms a trimeric complex with SOX2 or SOX15 on DNA and controls the expression of a number of genes involved in embryonic development such as YES1, FGF4, UTF1 and ZFP206. Critical for early embryogenesis and for embryonic stem cell pluripotency. The sequence is that of POU domain, class 5, transcription factor 1 (POU5F1) from Homo sapiens (Human).